Here is a 561-residue protein sequence, read N- to C-terminus: SUN domain-containing protein 5 (561 aa).

The helical transmembrane segment at 36 to 56 (GSFFERSISLVLLLWCFLFLV) threads the bilayer. One can recognise an SUN domain in the interval 158 to 318 (NGSSQLVNNG…SVVEVFGIDA (161 aa)). Residues 345–367 (ADEKQDGEIKSNRTDQIGKETEA) are disordered. Residues 454-499 (MEKELRDLELWKTLVASRVESLARGNSALRLDVEKIVKEQANLESK) are a coiled coil. 2 helical membrane passes run 501-521 (LGVL…LVST) and 540-560 (PDSG…IHLL).

Forms homomers. Interacts with SUN3 and TIK.

It is found in the membrane. In terms of biological role, encodes a member of the mid-SUN subfamily of SUN-domain proteins. It is involved in early seed development and nuclear morphology. [TAIR]. The protein is SUN domain-containing protein 5 of Arabidopsis thaliana (Mouse-ear cress).